We begin with the raw amino-acid sequence, 539 residues long: Inositol 1,4,5-trisphosphate receptor-interacting protein (539 aa).

A signal peptide spans 1 to 24 (MQGAIARVCMVVVAAILNHPLLFP). Over 25–71 (NENTTVPEQDEDLLARMKEHQEKLEAEQKRLEQEISQNETSVIGDQD) the chain is Extracellular. N-linked (GlcNAc...) asparagine glycosylation is found at Asn27 and Asn62. A coiled-coil region spans residues 32-68 (EQDEDLLARMKEHQEKLEAEQKRLEQEISQNETSVIG). The helical transmembrane segment at 72-92 (GYGWYFWSALCLVIFFTIEVC) threads the bilayer. The Cytoplasmic segment spans residues 93-539 (RQDLISAEIP…RHEFSSAEQI (447 aa)).

It belongs to the ITPRIP family.

The protein resides in the cell membrane. It localises to the nucleus outer membrane. In terms of biological role, enhances Ca(2+)-mediated inhibition of inositol 1,4,5-triphosphate receptor (ITPR) Ca(2+) release. The chain is Inositol 1,4,5-trisphosphate receptor-interacting protein (itprip) from Danio rerio (Zebrafish).